The chain runs to 261 residues: ATP synthase subunit a (261 aa).

5 helical membrane-spanning segments follow: residues alanine 28–phenylalanine 48, isoleucine 89–valine 109, asparagine 140–valine 160, leucine 203–phenylalanine 223, and phenylalanine 229–leucine 249.

It belongs to the ATPase A chain family. As to quaternary structure, F-type ATPases have 2 components, CF(1) - the catalytic core - and CF(0) - the membrane proton channel. CF(1) has five subunits: alpha(3), beta(3), gamma(1), delta(1), epsilon(1). CF(0) has three main subunits: a(1), b(2) and c(9-12). The alpha and beta chains form an alternating ring which encloses part of the gamma chain. CF(1) is attached to CF(0) by a central stalk formed by the gamma and epsilon chains, while a peripheral stalk is formed by the delta and b chains.

Its subcellular location is the cell inner membrane. In terms of biological role, key component of the proton channel; it plays a direct role in the translocation of protons across the membrane. The sequence is that of ATP synthase subunit a from Colwellia psychrerythraea (strain 34H / ATCC BAA-681) (Vibrio psychroerythus).